The chain runs to 179 residues: Large ribosomal subunit protein uL5 (179 aa).

The protein belongs to the universal ribosomal protein uL5 family. In terms of assembly, part of the 50S ribosomal subunit; part of the 5S rRNA/L5/L18/L25 subcomplex. Contacts the 5S rRNA and the P site tRNA. Forms a bridge to the 30S subunit in the 70S ribosome.

Functionally, this is one of the proteins that bind and probably mediate the attachment of the 5S RNA into the large ribosomal subunit, where it forms part of the central protuberance. In the 70S ribosome it contacts protein S13 of the 30S subunit (bridge B1b), connecting the 2 subunits; this bridge is implicated in subunit movement. Contacts the P site tRNA; the 5S rRNA and some of its associated proteins might help stabilize positioning of ribosome-bound tRNAs. This is Large ribosomal subunit protein uL5 from Salmonella agona (strain SL483).